The following is a 436-amino-acid chain: 3-ketoacyl-CoA thiolase (436 aa).

Cys-99 functions as the Acyl-thioester intermediate in the catalytic mechanism. Residues His-392 and Cys-422 each act as proton acceptor in the active site.

The protein belongs to the thiolase-like superfamily. Thiolase family. As to quaternary structure, heterotetramer of two alpha chains (FadJ) and two beta chains (FadI).

It is found in the cytoplasm. It carries out the reaction an acyl-CoA + acetyl-CoA = a 3-oxoacyl-CoA + CoA. The protein operates within lipid metabolism; fatty acid beta-oxidation. In terms of biological role, catalyzes the final step of fatty acid oxidation in which acetyl-CoA is released and the CoA ester of a fatty acid two carbons shorter is formed. The protein is 3-ketoacyl-CoA thiolase of Alteromonas mediterranea (strain DSM 17117 / CIP 110805 / LMG 28347 / Deep ecotype).